We begin with the raw amino-acid sequence, 192 residues long: Anthranilate synthase component 2 (192 aa).

Residues 3–192 enclose the Glutamine amidotransferase type-1 domain; sequence DILLLDNIDS…LEQTLAWALA (190 aa). An L-glutamine-binding site is contributed by 57–59; sequence GPG. Catalysis depends on C84, which acts as the Nucleophile; for GATase activity. L-glutamine contacts are provided by residues Q88 and 134–135; that span reads SL. Catalysis depends on for GATase activity residues H170 and E172.

In terms of assembly, heterotetramer consisting of two non-identical subunits: a beta subunit (TrpG) and a large alpha subunit (TrpE).

The catalysed reaction is chorismate + L-glutamine = anthranilate + pyruvate + L-glutamate + H(+). It participates in amino-acid biosynthesis; L-tryptophan biosynthesis; L-tryptophan from chorismate: step 1/5. Part of a heterotetrameric complex that catalyzes the two-step biosynthesis of anthranilate, an intermediate in the biosynthesis of L-tryptophan. In the first step, the glutamine-binding beta subunit (TrpG) of anthranilate synthase (AS) provides the glutamine amidotransferase activity which generates ammonia as a substrate that, along with chorismate, is used in the second step, catalyzed by the large alpha subunit of AS (TrpE) to produce anthranilate. In the absence of TrpG, TrpE can synthesize anthranilate directly from chorismate and high concentrations of ammonia. The protein is Anthranilate synthase component 2 (trpG) of Yersinia pestis.